The following is a 249-amino-acid chain: Type I iodothyronine deiodinase (249 aa).

Over 1–12 (MELPLPGLWLKR) the chain is Extracellular. Residues 13–33 (LWVLFQVALHVAMGKVLMTLF) form a helical; Signal-anchor for type III membrane protein membrane-spanning segment. At 34 to 249 (PGRVKQDILA…VRAVLEKLHS (216 aa)) the chain is on the cytoplasmic side. U126 is an active-site residue. A non-standard amino acid (selenocysteine) is located at residue U126.

This sequence belongs to the iodothyronine deiodinase family. Predominantly monomer. Can form homodimers but homodimerization is not essential for enzyme activity.

The protein resides in the cell membrane. It localises to the endoplasmic reticulum membrane. Its subcellular location is the basolateral cell membrane. It catalyses the reaction 3,3',5-triiodo-L-thyronine + iodide + A + H(+) = L-thyroxine + AH2. It carries out the reaction 3,3',5'-triiodo-L-thyronine + iodide + A + H(+) = L-thyroxine + AH2. The enzyme catalyses 3,3'-diiodo-L-thyronine + iodide + A + H(+) = 3,3',5'-triiodo-L-thyronine + AH2. The catalysed reaction is 3,3'-diiodo-L-thyronine + iodide + A + H(+) = 3,3',5-triiodo-L-thyronine + AH2. It catalyses the reaction 3'-iodo-L-thyronine + iodide + A + H(+) = 3',5'-diiodo-L-thyronine + AH2. It carries out the reaction 3-iodo-L-thyronine + iodide + A + H(+) = 3,5-diiodo-L-thyronine + AH2. The enzyme catalyses 3-iodo-L-thyronine + iodide + A + H(+) = 3,3'-diiodo-L-thyronine + AH2. The catalysed reaction is 3,3'-diiodothyronamine + iodide + A + H(+) = 3,3',5'-triiodothyronamine + AH2. It catalyses the reaction 3'-iodothyronamine + iodide + A + H(+) = 3',5'-diiodothyronamine + AH2. It carries out the reaction 3-iodothyronamine + iodide + A + H(+) = 3,3'-diiodothyronamine + AH2. The enzyme catalyses 3,3'-diiodothyronamine + iodide + A + H(+) = 3,3',5-triiodothyronamine + AH2. The catalysed reaction is 3-iodothyronamine + iodide + A + H(+) = 3,5-diiodothyronamine + AH2. It catalyses the reaction 3,3'-diiodo-L-thyronine sulfate + iodide + A + H(+) = 3,3',5'-triiodo-L-thyronine sulfate + AH2. It carries out the reaction 3,3',5'-triiodo-L-thyronine sulfate + iodide + A + H(+) = L-thyroxine sulfate + AH2. The enzyme catalyses 3,3'-diiodo-L-thyronine sulfate + iodide + A + H(+) = 3,3',5-triiodo-L-thyronine sulfate + AH2. Its function is as follows. Plays a crucial role in the metabolism of thyroid hormones (TH) and has specific roles in TH activation and inactivation by deiodination. Catalyzes the deiodination of L-thyroxine (T4) to 3,5,3'-triiodothyronine (T3) and 3,3',5'-triiodothyronine (rT3) to 3,3'-diiodothyronine (3,3'-T2) via outer-ring deiodination (ORD). Catalyzes the deiodination of T4 to rT3, T3 to 3,3'-T2, 3,5-diiodothyronine (3,5-T2) to 3-monoiodothyronine (3-T1) and 3,3'-T2 to 3-T1 via inner-ring deiodination (IRD). Catalyzes the deiodination of 3',5'-diiodothyronine (3',5'-T2) to 3'-monoiodothyronine (3'-T1) via ORD. Catalyzes the phenolic ring deiodinations of 3,3',5'-triiodothyronamine, 3',5'-diiodothyronamine and 3,3'-diiodothyronamine as well as tyrosyl ring deiodinations of 3,5,3'-triiodothyronamine and 3,5-diiodothyronamine. Catalyzes the deiodination of L-thyroxine sulfate and 3,3',5-triiodo-L-thyronine sulfate via IRD and of 3,3',5'-triiodo-L-thyronine sulfate via ORD. The polypeptide is Type I iodothyronine deiodinase (DIO1) (Sus scrofa (Pig)).